The primary structure comprises 396 residues: Phosphoglycerate kinase (396 aa).

Residues 21–23, Arg-37, 60–63, Arg-121, and Arg-154 each bind substrate; these read DFN and HLGR. Residues Lys-205, Gly-296, Glu-327, and 353–356 each bind ATP; that span reads GGDS.

The protein belongs to the phosphoglycerate kinase family. Monomer.

It is found in the cytoplasm. The enzyme catalyses (2R)-3-phosphoglycerate + ATP = (2R)-3-phospho-glyceroyl phosphate + ADP. It functions in the pathway carbohydrate degradation; glycolysis; pyruvate from D-glyceraldehyde 3-phosphate: step 2/5. This Anaeromyxobacter sp. (strain K) protein is Phosphoglycerate kinase.